Reading from the N-terminus, the 122-residue chain is Biogenesis of lysosome-related organelles complex 1 subunit CNL1 (122 aa).

Basic and acidic residues predominate over residues 1-10; it reads MQDNSSHSRE. The segment at 1-21 is disordered; that stretch reads MQDNSSHSRESASAGDDPLGI. The stretch at 63-95 forms a coiled coil; the sequence is ENTIDKNIAKFKELLEKCDTLENHYEMLNQLAI.

Belongs to the BLOC1S4 family. As to quaternary structure, component of the biogenesis of lysosome-related organelles complex-1 (BLOC-1) composed of at least BLI1, BLS1, CNL1, KXD1, SNN1 and VAB2.

It localises to the cytoplasm. Its function is as follows. Component of the biogenesis of lysosome-related organelles complex-1 (BLOC-1), a complex that is involved in endosomal cargo sorting. The sequence is that of Biogenesis of lysosome-related organelles complex 1 subunit CNL1 (CLN1) from Saccharomyces cerevisiae (strain RM11-1a) (Baker's yeast).